The following is a 353-amino-acid chain: rRNA methyltransferase 1, mitochondrial (353 aa).

The N-terminal 20 residues, 1–20, are a transit peptide targeting the mitochondrion; that stretch reads MALLSTVRGATWGRLVTRHF. Positions 311–353 are disordered; that stretch reads PTEGERRQLLQDPQEPSARSEGLSMAQHPGLSSGPEKERQNEG.

It belongs to the class IV-like SAM-binding methyltransferase superfamily. RNA methyltransferase TrmH family.

The protein resides in the mitochondrion matrix. The enzyme catalyses guanosine(1145) in 16S rRNA + S-adenosyl-L-methionine = 2'-O-methylguanosine(1145) in 16S rRNA + S-adenosyl-L-homocysteine + H(+). Functionally, S-adenosyl-L-methionine-dependent 2'-O-ribose methyltransferase that catalyzes the formation of 2'-O-methylguanosine at position 1145 (Gm1145) in the 16S mitochondrial large subunit ribosomal RNA (mtLSU rRNA), a universally conserved modification in the peptidyl transferase domain of the mtLSU rRNA. The chain is rRNA methyltransferase 1, mitochondrial from Homo sapiens (Human).